A 133-amino-acid polypeptide reads, in one-letter code: Small ribosomal subunit protein uS8 (133 aa).

The protein belongs to the universal ribosomal protein uS8 family. Part of the 30S ribosomal subunit. Contacts proteins S5 and S12.

Functionally, one of the primary rRNA binding proteins, it binds directly to 16S rRNA central domain where it helps coordinate assembly of the platform of the 30S subunit. In Salinibacter ruber (strain DSM 13855 / M31), this protein is Small ribosomal subunit protein uS8.